We begin with the raw amino-acid sequence, 905 residues long: MKRLSSAAIREQFLRFFEERGHVRVPSSSLIPGNDPTLLFTNSGMVQFKDTFLGLEQRPYTRATTAQKCLRVSGKHNDLEEVGPSPRHHTFFEMLGNFSFGDYFKAEAIPMAWELLTKVFDLPVERLWFTVFEGDDEVPPDDEAAQLWVAAGADPERVLRFGRKDNFWVMADAGPCGPCSEITIFIGDDLKEMSAKGVNSDDPNYVEIWNNVFMQFERSTMQPLHRPSVDTGMGLERMAMVMQGVHSTYDTDLFIPLIERQLALLGADEPTYRAHVAPFRAVADHSRAVAFLIADGVLPGNTGRSYVLRRILRRAVYQGRTVGFEKPFLADVAAVVIEQMGAVYPELRERADFILETVDLEERQFLRTLSGGVSILKSVIERVRAVGGTVIPGDDAFTLKDTYGFPLDLTQKIAAEHGLTVDEAGYERRMEEQRARGRRAAQFKRAADAEAWADIDLPPTRFTGYLGVSGSGTVQALIVAGDQVAEAVAGQQVQIALDSTPFYAESGGQIGDTGVLIGPRGRARIDDVQRPVPGVIVHYGVVEEGAIAVYETVEAQVDSVRRAAIMRSHTATHLLHRALRDVLGEHAAQAGSLVAPDRLRFDFTHTRPVTPEQLREIERRVNAWIRADTPVAWQELPYQAALEAGAIALFGEKYGDVVRMVTIGCVNGNDALSPAAIAERQRAGFRMCSRELCGGTHVGRSGEIGLFRIVSESSVAAGVRRIEALTGAEAEQWVDAQIATLHNIAARVGAPPSQLGERIEALLAELKQRQRALDELHARQARSNLEGLLANVQAVGDIRFLAAQVEAPDTARLREMGDWLRDKLGSGVVVLAAVIDGKAQILAMATPDLAGRRIHAGNLVKALAPIVGGSGGGRPDMAQAGGREVAHIPDALEHVAAALAAQAGG.

H569, H573, C693, and H697 together coordinate Zn(2+).

The protein belongs to the class-II aminoacyl-tRNA synthetase family. It depends on Zn(2+) as a cofactor.

The protein resides in the cytoplasm. The catalysed reaction is tRNA(Ala) + L-alanine + ATP = L-alanyl-tRNA(Ala) + AMP + diphosphate. Catalyzes the attachment of alanine to tRNA(Ala) in a two-step reaction: alanine is first activated by ATP to form Ala-AMP and then transferred to the acceptor end of tRNA(Ala). Also edits incorrectly charged Ser-tRNA(Ala) and Gly-tRNA(Ala) via its editing domain. This Roseiflexus castenholzii (strain DSM 13941 / HLO8) protein is Alanine--tRNA ligase.